The following is a 346-amino-acid chain: Ribosomal RNA small subunit methyltransferase H (346 aa).

Residues 47 to 49, aspartate 65, phenylalanine 92, aspartate 113, and glutamine 120 each bind S-adenosyl-L-methionine; that span reads GGY. The disordered stretch occupies residues 294–346; it reads AVEPGSDEVAGNPRARSAKLRAAERTDAPAHPDGDLAGLLPADLSQRRGRRRS. The span at 314 to 327 shows a compositional bias: basic and acidic residues; that stretch reads RAAERTDAPAHPDG. Low complexity predominate over residues 328-337; it reads DLAGLLPADL.

This sequence belongs to the methyltransferase superfamily. RsmH family.

It is found in the cytoplasm. The catalysed reaction is cytidine(1402) in 16S rRNA + S-adenosyl-L-methionine = N(4)-methylcytidine(1402) in 16S rRNA + S-adenosyl-L-homocysteine + H(+). Specifically methylates the N4 position of cytidine in position 1402 (C1402) of 16S rRNA. This chain is Ribosomal RNA small subunit methyltransferase H, found in Azorhizobium caulinodans (strain ATCC 43989 / DSM 5975 / JCM 20966 / LMG 6465 / NBRC 14845 / NCIMB 13405 / ORS 571).